A 203-amino-acid chain; its full sequence is Holliday junction branch migration complex subunit RuvA (203 aa).

Residues 1–64 (MIGRLRGIII…EDAQLLYGFN (64 aa)) form a domain I region. The domain II stretch occupies residues 65-142 (NKQERTLFKE…KGLHGDLFTP (78 aa)). The flexible linker stretch occupies residues 143–154 (AADLVLTSPASP). A domain III region spans residues 155 to 203 (ATDDAEQEAVAALVALGYKPQEASRMVSKIARPDTSSETLIREALRAAL).

Belongs to the RuvA family. As to quaternary structure, homotetramer. Forms an RuvA(8)-RuvB(12)-Holliday junction (HJ) complex. HJ DNA is sandwiched between 2 RuvA tetramers; dsDNA enters through RuvA and exits via RuvB. An RuvB hexamer assembles on each DNA strand where it exits the tetramer. Each RuvB hexamer is contacted by two RuvA subunits (via domain III) on 2 adjacent RuvB subunits; this complex drives branch migration. In the full resolvosome a probable DNA-RuvA(4)-RuvB(12)-RuvC(2) complex forms which resolves the HJ.

It is found in the cytoplasm. In terms of biological role, the RuvA-RuvB-RuvC complex processes Holliday junction (HJ) DNA during genetic recombination and DNA repair, while the RuvA-RuvB complex plays an important role in the rescue of blocked DNA replication forks via replication fork reversal (RFR). RuvA specifically binds to HJ cruciform DNA, conferring on it an open structure. The RuvB hexamer acts as an ATP-dependent pump, pulling dsDNA into and through the RuvAB complex. HJ branch migration allows RuvC to scan DNA until it finds its consensus sequence, where it cleaves and resolves the cruciform DNA. The protein is Holliday junction branch migration complex subunit RuvA of Shigella flexneri serotype 5b (strain 8401).